The chain runs to 515 residues: Fatty acyl-CoA reductase 1 (515 aa).

Topologically, residues 1 to 465 (MVSIPEYYEG…ARKHLNKLRN (465 aa)) are cytoplasmic. Residues 466-483 (IRYGFNTILVILIWRIFI) traverse the membrane as a helical segment. At 484-515 (ARSQMARNIWYFVVSLCYKFLSYFRASSTMRY) the chain is on the peroxisomal side.

The protein belongs to the fatty acyl-CoA reductase family.

The protein localises to the peroxisome membrane. It catalyses the reaction a long-chain fatty acyl-CoA + 2 NADPH + 2 H(+) = a long-chain primary fatty alcohol + 2 NADP(+) + CoA. The catalysed reaction is hexadecanoyl-CoA + 2 NADPH + 2 H(+) = hexadecan-1-ol + 2 NADP(+) + CoA. The enzyme catalyses octadecanoyl-CoA + 2 NADPH + 2 H(+) = octadecan-1-ol + 2 NADP(+) + CoA. It carries out the reaction (9Z)-octadecenoyl-CoA + 2 NADPH + 2 H(+) = (9Z)-octadecen-1-ol + 2 NADP(+) + CoA. It catalyses the reaction (9Z,12Z)-octadecadienoyl-CoA + 2 NADPH + 2 H(+) = (9Z,12Z)-octadecadien-1-ol + 2 NADP(+) + CoA. The catalysed reaction is eicosanoyl-CoA + 2 NADPH + 2 H(+) = eicosan-1-ol + 2 NADP(+) + CoA. The enzyme catalyses 16-methylheptadecanoyl-CoA + 2 NADPH + 2 H(+) = 16-methylheptadecan-1-ol + 2 NADP(+) + CoA. It carries out the reaction 18-methylnonadecanoyl-CoA + 2 NADPH + 2 H(+) = 18-methylnonadecan-1-ol + 2 NADP(+) + CoA. Its function is as follows. Catalyzes the reduction of saturated and unsaturated C16 or C18 fatty acyl-CoA to fatty alcohols. It plays an essential role in the production of ether lipids/plasmalogens which synthesis requires fatty alcohols. In parallel, it is also required for wax monoesters production since fatty alcohols also constitute a substrate for their synthesis. The protein is Fatty acyl-CoA reductase 1 of Gallus gallus (Chicken).